The chain runs to 461 residues: Cytochrome c biogenesis protein CcsB (461 aa).

Helical transmembrane passes span 32 to 52, 91 to 111, and 178 to 198; these read LRLA…GTVI, TWWF…CTFT, and IGPI…IWGA.

This sequence belongs to the Ccs1/CcsB family. In terms of assembly, may interact with CcsA.

Its subcellular location is the cellular thylakoid membrane. Functionally, required during biogenesis of c-type cytochromes (cytochrome c6 and cytochrome f) at the step of heme attachment. In Nostoc sp. (strain PCC 7120 / SAG 25.82 / UTEX 2576), this protein is Cytochrome c biogenesis protein CcsB.